The primary structure comprises 129 residues: Large ribosomal subunit protein eL32 (129 aa).

The protein belongs to the eukaryotic ribosomal protein eL32 family.

The sequence is that of Large ribosomal subunit protein eL32 (rpl32e) from Archaeoglobus fulgidus (strain ATCC 49558 / DSM 4304 / JCM 9628 / NBRC 100126 / VC-16).